Reading from the N-terminus, the 473-residue chain is MNAAVIDSKNSQDFVVADMSLADWGRKELNIAETEMPGLVQTREEYKAQQPLKGARIAGSLHMTIQTGVLIETLTALGADVRWASCNIFSTQDHAAAAIAKAGTPVFAFKGESLDEYWEFSHRIFEWPNGEFANMILDDGGDATLLLILGSKAEKDRSVISKPTNEEEVALYKSIASHLDADPTWYSTRLAHIQGVTEETTTGVHRLYQMEKEGRLPFPAINVNDSVTKSKFDNLYGCRESLVDGIKRATDVMIAGKIAVVAGYGDVGKGCAQSLRGLGATVWVTEIDPICALQAAMEGYRVVTMEYAADKADIFVTATGNYHVIGHDHMKAMRHNAIVCNIGHFDSEIDVASTRQYQWDNIKPQVDHIIFPDGKRVILLAEGRLVNLGCATGHPSFVMSNSFTNQTLAQIELFTQGEKYENKVYVLPKHLDEKVARLHLARIGANLTVLSDDQAGYIGVDKNGPFKPNHYRY.

3 residues coordinate substrate: threonine 64, aspartate 139, and glutamate 199. 200-202 contributes to the NAD(+) binding site; sequence TTT. Lysine 229 and aspartate 233 together coordinate substrate. NAD(+) is bound by residues asparagine 234, 263–268, glutamate 286, asparagine 321, 342–344, and asparagine 387; these read GYGDVG and IGH.

Belongs to the adenosylhomocysteinase family. NAD(+) is required as a cofactor.

It is found in the cytoplasm. The catalysed reaction is S-adenosyl-L-homocysteine + H2O = L-homocysteine + adenosine. It participates in amino-acid biosynthesis; L-homocysteine biosynthesis; L-homocysteine from S-adenosyl-L-homocysteine: step 1/1. May play a key role in the regulation of the intracellular concentration of adenosylhomocysteine. The protein is Adenosylhomocysteinase of Paraburkholderia phytofirmans (strain DSM 17436 / LMG 22146 / PsJN) (Burkholderia phytofirmans).